A 186-amino-acid polypeptide reads, in one-letter code: Small ribosomal subunit protein uS5 (186 aa).

Residues 20 to 83 (FVDKLVHINR…EAAKRDMIFV (64 aa)) enclose the S5 DRBM domain.

It belongs to the universal ribosomal protein uS5 family. In terms of assembly, part of the 30S ribosomal subunit. Contacts proteins S4 and S8.

With S4 and S12 plays an important role in translational accuracy. Functionally, located at the back of the 30S subunit body where it stabilizes the conformation of the head with respect to the body. The chain is Small ribosomal subunit protein uS5 from Brucella anthropi (strain ATCC 49188 / DSM 6882 / CCUG 24695 / JCM 21032 / LMG 3331 / NBRC 15819 / NCTC 12168 / Alc 37) (Ochrobactrum anthropi).